A 69-amino-acid polypeptide reads, in one-letter code: Cytochrome c oxidase subunit 8A, mitochondrial (69 aa).

The transit peptide at Met1 to Arg25 directs the protein to the mitochondrion. The short motif at Ser2–Leu19 is the SIFI-degron element. The Mitochondrial matrix portion of the chain corresponds to Val26 to Gly36. Residues Thr37–Ser60 form a helical membrane-spanning segment. The Mitochondrial intermembrane segment spans residues His61–Glu69.

Belongs to the cytochrome c oxidase VIII family. Component of the cytochrome c oxidase (complex IV, CIV), a multisubunit enzyme composed of 14 subunits. The complex is composed of a catalytic core of 3 subunits MT-CO1, MT-CO2 and MT-CO3, encoded in the mitochondrial DNA, and 11 supernumerary subunits COX4I, COX5A, COX5B, COX6A, COX6B, COX6C, COX7A, COX7B, COX7C, COX8 and NDUFA4, which are encoded in the nuclear genome. The complex exists as a monomer or a dimer and forms supercomplexes (SCs) in the inner mitochondrial membrane with NADH-ubiquinone oxidoreductase (complex I, CI) and ubiquinol-cytochrome c oxidoreductase (cytochrome b-c1 complex, complex III, CIII), resulting in different assemblies (supercomplex SCI(1)III(2)IV(1) and megacomplex MCI(2)III(2)IV(2)). Post-translationally, in response to mitochondrial stress, the precursor protein is ubiquitinated by the SIFI complex in the cytoplasm before mitochondrial import, leading to its degradation. Within the SIFI complex, UBR4 initiates ubiquitin chain that are further elongated or branched by KCMF1.

It localises to the mitochondrion inner membrane. Its pathway is energy metabolism; oxidative phosphorylation. In terms of biological role, component of the cytochrome c oxidase, the last enzyme in the mitochondrial electron transport chain which drives oxidative phosphorylation. The respiratory chain contains 3 multisubunit complexes succinate dehydrogenase (complex II, CII), ubiquinol-cytochrome c oxidoreductase (cytochrome b-c1 complex, complex III, CIII) and cytochrome c oxidase (complex IV, CIV), that cooperate to transfer electrons derived from NADH and succinate to molecular oxygen, creating an electrochemical gradient over the inner membrane that drives transmembrane transport and the ATP synthase. Cytochrome c oxidase is the component of the respiratory chain that catalyzes the reduction of oxygen to water. Electrons originating from reduced cytochrome c in the intermembrane space (IMS) are transferred via the dinuclear copper A center (CU(A)) of subunit 2 and heme A of subunit 1 to the active site in subunit 1, a binuclear center (BNC) formed by heme A3 and copper B (CU(B)). The BNC reduces molecular oxygen to 2 water molecules using 4 electrons from cytochrome c in the IMS and 4 protons from the mitochondrial matrix. The protein is Cytochrome c oxidase subunit 8A, mitochondrial (COX8A) of Otolemur crassicaudatus (Brown greater galago).